Reading from the N-terminus, the 439-residue chain is Cln5-like protein 3 (439 aa).

The signal sequence occupies residues methionine 1–serine 24. 10 N-linked (GlcNAc...) asparagine glycosylation sites follow: asparagine 93, asparagine 112, asparagine 122, asparagine 138, asparagine 168, asparagine 219, asparagine 268, asparagine 289, asparagine 304, and asparagine 359. The chain crosses the membrane as a helical span at residues isoleucine 371–glycine 391.

The protein belongs to the CLN5 family.

It is found in the membrane. This chain is Cln5-like protein 3 (cln5lc), found in Dictyostelium discoideum (Social amoeba).